A 228-amino-acid polypeptide reads, in one-letter code: Ribonuclease 3 (228 aa).

The RNase III domain maps to 5-127 (KDALQDRLGY…LFGAIYLDGG (123 aa)). Residue E40 coordinates Mg(2+). The active site involves D44. The Mg(2+) site is built by D113 and E116. The active site involves E116. The DRBM domain maps to 154-224 (DPKTRLQEHL…AEQMLKRLED (71 aa)). Positions 200 to 228 (AEGEAGSRRKAEQQAAEQMLKRLEDKHER) are disordered. Over residues 218 to 228 (MLKRLEDKHER) the composition is skewed to basic and acidic residues.

This sequence belongs to the ribonuclease III family. As to quaternary structure, homodimer. The cofactor is Mg(2+).

Its subcellular location is the cytoplasm. The enzyme catalyses Endonucleolytic cleavage to 5'-phosphomonoester.. In terms of biological role, digests double-stranded RNA. Involved in the processing of primary rRNA transcript to yield the immediate precursors to the large and small rRNAs (23S and 16S). Processes some mRNAs, and tRNAs when they are encoded in the rRNA operon. Processes pre-crRNA and tracrRNA of type II CRISPR loci if present in the organism. The chain is Ribonuclease 3 from Alkalilimnicola ehrlichii (strain ATCC BAA-1101 / DSM 17681 / MLHE-1).